The primary structure comprises 93 residues: Large ribosomal subunit protein eL42 (93 aa).

Zn(2+)-binding residues include Cys-11, Cys-14, Cys-72, and Cys-75. The C4-type zinc-finger motif lies at 11 to 75 (CPHCHSHFEH…TDLKYRCSEC (65 aa)).

This sequence belongs to the eukaryotic ribosomal protein eL42 family. Part of the 50S ribosomal subunit. Requires Zn(2+) as cofactor.

In terms of biological role, binds to the 23S rRNA. The protein is Large ribosomal subunit protein eL42 (rpl44e) of Natronomonas pharaonis (strain ATCC 35678 / DSM 2160 / CIP 103997 / JCM 8858 / NBRC 14720 / NCIMB 2260 / Gabara) (Halobacterium pharaonis).